Reading from the N-terminus, the 569-residue chain is Sulfite reductase [NADPH] hemoprotein beta-component (569 aa).

Residues cysteine 433, cysteine 439, cysteine 478, and cysteine 482 each coordinate [4Fe-4S] cluster. Siroheme is bound at residue cysteine 482.

The protein belongs to the nitrite and sulfite reductase 4Fe-4S domain family. Alpha(8)-beta(8). The alpha component is a flavoprotein, the beta component is a hemoprotein. The cofactor is siroheme. [4Fe-4S] cluster serves as cofactor.

The enzyme catalyses hydrogen sulfide + 3 NADP(+) + 3 H2O = sulfite + 3 NADPH + 4 H(+). It participates in sulfur metabolism; hydrogen sulfide biosynthesis; hydrogen sulfide from sulfite (NADPH route): step 1/1. In terms of biological role, component of the sulfite reductase complex that catalyzes the 6-electron reduction of sulfite to sulfide. This is one of several activities required for the biosynthesis of L-cysteine from sulfate. The protein is Sulfite reductase [NADPH] hemoprotein beta-component of Buchnera aphidicola subsp. Acyrthosiphon pisum (strain 5A).